The following is a 122-amino-acid chain: Small ribosomal subunit protein bS6 (122 aa).

It belongs to the bacterial ribosomal protein bS6 family.

Binds together with bS18 to 16S ribosomal RNA. This Neisseria meningitidis serogroup B (strain ATCC BAA-335 / MC58) protein is Small ribosomal subunit protein bS6 (rpsF).